The following is a 513-amino-acid chain: Catalase (513 aa).

A signal peptide spans 1–30 (MNPSLNAFRPGRLLVAASLTASLLSLSVQA). Residues histidine 81 and asparagine 153 contribute to the active site. Tyrosine 361 contacts heme. Over residues 391-407 (DGALNAGHSTSGVNYQP) the composition is skewed to polar residues. The segment at 391-413 (DGALNAGHSTSGVNYQPSRLDPR) is disordered.

It belongs to the catalase family. Heme serves as cofactor.

It localises to the periplasm. It carries out the reaction 2 H2O2 = O2 + 2 H2O. Functionally, decomposes hydrogen peroxide into water and oxygen; serves to protect cells from the toxic effects of hydrogen peroxide. In Pseudomonas aeruginosa (strain ATCC 15692 / DSM 22644 / CIP 104116 / JCM 14847 / LMG 12228 / 1C / PRS 101 / PAO1), this protein is Catalase (katB).